The following is a 394-amino-acid chain: NAC domain-containing protein 26 (394 aa).

Residues 7 to 156 form the NAC domain; that stretch reads VPPGFRFHPT…GWVVCRVFKK (150 aa). Residues 107-162 mediate DNA binding; it reads IGMRKTLVFYKGRAPNGQKSDWIMHEYRLETSENGTPQEEGWVVCRVFKKKLAATV.

Belongs to the plant vascular related NAC-domain protein family. In terms of assembly, interacts with NAC083/VNI2. As to expression, detected in root vessels of protoxylems, outermost metaxylems, inner metaxylems, shoots and hypocotyls. Expressed in roots, hypocotyls, cotyledons and leaves. Expressed in developing xylems. Specifically expressed in vessels in the secondary xylem of the root-hypocotyl region, and in vessels but not in interfascicular fibers in stems.

The protein resides in the nucleus. Transcription activator that binds to the secondary wall NAC binding element (SNBE), 5'-(T/A)NN(C/T)(T/C/G)TNNNNNNNA(A/C)GN(A/C/T)(A/T)-3', in the promoter of target genes. Involved in xylem formation by promoting the expression of secondary wall-associated transcription factors and of genes involved in secondary wall biosynthesis and programmed cell death, genes driven by the secondary wall NAC binding element (SNBE). Triggers thickening of secondary walls. The protein is NAC domain-containing protein 26 of Arabidopsis thaliana (Mouse-ear cress).